Reading from the N-terminus, the 393-residue chain is DNA-directed RNA polymerase subunit Rpo1C (393 aa).

It belongs to the RNA polymerase beta' chain family. In terms of assembly, part of the RNA polymerase complex.

The protein localises to the cytoplasm. The enzyme catalyses RNA(n) + a ribonucleoside 5'-triphosphate = RNA(n+1) + diphosphate. In terms of biological role, DNA-dependent RNA polymerase (RNAP) catalyzes the transcription of DNA into RNA using the four ribonucleoside triphosphates as substrates. Forms part of the jaw domain. The polypeptide is DNA-directed RNA polymerase subunit Rpo1C (Halococcus morrhuae (Micrococcus morrhuae)).